A 426-amino-acid polypeptide reads, in one-letter code: Serine--tRNA ligase (426 aa).

229-231 (TAE) lines the L-serine pocket. Residues 260 to 262 (RKE) and Val-276 each bind ATP. Glu-283 contacts L-serine. Position 349-352 (349-352 (EVTS)) interacts with ATP. Residue Thr-384 coordinates L-serine.

It belongs to the class-II aminoacyl-tRNA synthetase family. Type-1 seryl-tRNA synthetase subfamily. As to quaternary structure, homodimer. The tRNA molecule binds across the dimer.

Its subcellular location is the cytoplasm. It carries out the reaction tRNA(Ser) + L-serine + ATP = L-seryl-tRNA(Ser) + AMP + diphosphate + H(+). The enzyme catalyses tRNA(Sec) + L-serine + ATP = L-seryl-tRNA(Sec) + AMP + diphosphate + H(+). Its pathway is aminoacyl-tRNA biosynthesis; selenocysteinyl-tRNA(Sec) biosynthesis; L-seryl-tRNA(Sec) from L-serine and tRNA(Sec): step 1/1. Catalyzes the attachment of serine to tRNA(Ser). Is also able to aminoacylate tRNA(Sec) with serine, to form the misacylated tRNA L-seryl-tRNA(Sec), which will be further converted into selenocysteinyl-tRNA(Sec). This Treponema pallidum (strain Nichols) protein is Serine--tRNA ligase.